Reading from the N-terminus, the 306-residue chain is Armadillo repeat-containing protein 10 (306 aa).

The chain crosses the membrane as a helical span at residues 7 to 29; it reads VGWVAAGLVLGAGACYCIYRLTR. Ser43 bears the Phosphoserine mark. Residue Thr48 is modified to Phosphothreonine. An ARM repeat occupies 101-143; it reads GGIPIVGNKINSLNQSIKEKALNALNNLSVNVENQTKIKIYVP.

As to quaternary structure, interacts with the DNA-binding domain of p53/TP53.

Its subcellular location is the endoplasmic reticulum membrane. The protein resides in the mitochondrion outer membrane. In terms of biological role, may play a role in cell survival and cell growth. May suppress the transcriptional activity of p53/TP53. In Mus musculus (Mouse), this protein is Armadillo repeat-containing protein 10 (Armc10).